We begin with the raw amino-acid sequence, 181 residues long: Protein Syd (181 aa).

Belongs to the Syd family.

The protein localises to the cell inner membrane. Interacts with the SecY protein in vivo. May bind preferentially to an uncomplexed state of SecY, thus functioning either as a chelating agent for excess SecY in the cell or as a regulatory factor that negatively controls the translocase function. This Shigella dysenteriae serotype 1 (strain Sd197) protein is Protein Syd.